Here is a 60-residue protein sequence, read N- to C-terminus: Metallothionein (60 aa).

The interval 1–28 is beta; sequence MDCACATGGSCSCAGSCKCENCKCTSCK. A divalent metal cation is bound by residues cysteine 3, cysteine 5, cysteine 11, cysteine 13, cysteine 17, cysteine 19, cysteine 22, cysteine 24, cysteine 27, cysteine 31, cysteine 32, cysteine 34, cysteine 35, cysteine 39, cysteine 42, cysteine 46, cysteine 48, cysteine 56, cysteine 58, and cysteine 59. Positions 29 to 60 are alpha; that stretch reads KSCCSCCPSECEKCGQGCVCKGGSSEKCSCCN.

This sequence belongs to the metallothionein superfamily. Type 1 family.

Metallothioneins have a high content of cysteine residues that bind various heavy metals. The sequence is that of Metallothionein (MT-A) from Ambystoma mexicanum (Axolotl).